The sequence spans 568 residues: Periplasmic trehalase (568 aa).

The first 38 residues, 1 to 38, serve as a signal peptide directing secretion; that stretch reads MPHAPARSGDAMSAAAPPCCTSLLGLSLSMFVAPCALA. Substrate-binding positions include Arg-169, 176-177, Asn-213, 222-224, 294-296, and Gly-327; these read WD, RSQ, and RPE. Catalysis depends on proton donor/acceptor residues Asp-329 and Glu-511. A substrate-binding site is contributed by Glu-526.

It belongs to the glycosyl hydrolase 37 family.

It localises to the periplasm. It carries out the reaction alpha,alpha-trehalose + H2O = alpha-D-glucose + beta-D-glucose. Provides the cells with the ability to utilize trehalose at high osmolarity by splitting it into glucose molecules that can subsequently be taken up by the phosphotransferase-mediated uptake system. The chain is Periplasmic trehalase from Xanthomonas campestris pv. campestris (strain B100).